Reading from the N-terminus, the 333-residue chain is Ketol-acid reductoisomerase (NADP(+)) (333 aa).

The KARI N-terminal Rossmann domain occupies 2-182; the sequence is AKMYYDSDAS…GCTRAGVLET (181 aa). NADP(+) is bound by residues 25 to 28, R48, S51, and 83 to 86; these read YGSQ and DERQ. H108 is a catalytic residue. G134 is an NADP(+) binding site. Residues 183–328 form the KARI C-terminal knotted domain; sequence TFKEETETDL…AELRAMMPFI (146 aa). Mg(2+) contacts are provided by D191, E195, E227, and E231. S252 is a substrate binding site.

It belongs to the ketol-acid reductoisomerase family. The cofactor is Mg(2+).

The catalysed reaction is (2R)-2,3-dihydroxy-3-methylbutanoate + NADP(+) = (2S)-2-acetolactate + NADPH + H(+). It catalyses the reaction (2R,3R)-2,3-dihydroxy-3-methylpentanoate + NADP(+) = (S)-2-ethyl-2-hydroxy-3-oxobutanoate + NADPH + H(+). The protein operates within amino-acid biosynthesis; L-isoleucine biosynthesis; L-isoleucine from 2-oxobutanoate: step 2/4. It participates in amino-acid biosynthesis; L-valine biosynthesis; L-valine from pyruvate: step 2/4. Functionally, involved in the biosynthesis of branched-chain amino acids (BCAA). Catalyzes an alkyl-migration followed by a ketol-acid reduction of (S)-2-acetolactate (S2AL) to yield (R)-2,3-dihydroxy-isovalerate. In the isomerase reaction, S2AL is rearranged via a Mg-dependent methyl migration to produce 3-hydroxy-3-methyl-2-ketobutyrate (HMKB). In the reductase reaction, this 2-ketoacid undergoes a metal-dependent reduction by NADPH to yield (R)-2,3-dihydroxy-isovalerate. The chain is Ketol-acid reductoisomerase (NADP(+)) from Desulfitobacterium hafniense (strain DSM 10664 / DCB-2).